Here is a 194-residue protein sequence, read N- to C-terminus: Peptidyl-tRNA hydrolase (194 aa).

Residue Tyr17 participates in tRNA binding. Catalysis depends on His22, which acts as the Proton acceptor. Positions 68, 70, and 116 each coordinate tRNA.

Belongs to the PTH family. In terms of assembly, monomer.

Its subcellular location is the cytoplasm. It catalyses the reaction an N-acyl-L-alpha-aminoacyl-tRNA + H2O = an N-acyl-L-amino acid + a tRNA + H(+). Hydrolyzes ribosome-free peptidyl-tRNAs (with 1 or more amino acids incorporated), which drop off the ribosome during protein synthesis, or as a result of ribosome stalling. Its function is as follows. Catalyzes the release of premature peptidyl moieties from peptidyl-tRNA molecules trapped in stalled 50S ribosomal subunits, and thus maintains levels of free tRNAs and 50S ribosomes. The sequence is that of Peptidyl-tRNA hydrolase from Marinomonas sp. (strain MWYL1).